A 184-amino-acid chain; its full sequence is Adenine phosphoribosyltransferase (184 aa).

The protein belongs to the purine/pyrimidine phosphoribosyltransferase family. In terms of assembly, homodimer.

The protein localises to the cytoplasm. The enzyme catalyses AMP + diphosphate = 5-phospho-alpha-D-ribose 1-diphosphate + adenine. It participates in purine metabolism; AMP biosynthesis via salvage pathway; AMP from adenine: step 1/1. Its function is as follows. Catalyzes a salvage reaction resulting in the formation of AMP, that is energically less costly than de novo synthesis. The sequence is that of Adenine phosphoribosyltransferase from Paracidovorax citrulli (strain AAC00-1) (Acidovorax citrulli).